We begin with the raw amino-acid sequence, 474 residues long: CUGBP Elav-like family member 4 (474 aa).

Positions 1–287 are sufficient for RNA-binding and MSE-dependent splicing activity; it reads MYIKMATLAN…AAFAAAQMQQ (287 aa). Residues 18-28 show a composition bias toward polar residues; sequence LSTNGLGSSPG. The tract at residues 18 to 41 is disordered; sequence LSTNGLGSSPGSAGHMNGLSHSPG. RRM domains follow at residues 54–135 and 141–221; these read IKLF…PADS and RKLF…FADT. Positions 228-247 are necessary for TNNT2 exon 5 inclusion; the sequence is RRMQQMAGQMGMFNPMAIPF. The RRM 3 domain occupies 392-467; sequence PQPPPMIPQQ…KRLKVQLKRP (76 aa).

This sequence belongs to the CELF/BRUNOL family.

The protein localises to the nucleus. It localises to the cytoplasm. Its function is as follows. RNA-binding protein implicated in the regulation of pre-mRNA alternative splicing. Mediates exon inclusion and/or exclusion in pre-mRNA that are subject to tissue-specific and developmentally regulated alternative splicing. Specifically activates exon 5 inclusion of cardiac isoforms of TNNT2 during heart remodeling at the juvenile to adult transition. Promotes exclusion of both the smooth muscle (SM) and non-muscle (NM) exons in actinin pre-mRNAs. Activates the splicing of MAPT/Tau exon 10. Binds to muscle-specific splicing enhancer (MSE) intronic sites flanking the alternative exon 5 of TNNT2 pre-mRNA. The protein is CUGBP Elav-like family member 4 (CELF4) of Macaca fascicularis (Crab-eating macaque).